Reading from the N-terminus, the 336-residue chain is Dihydroorotate dehydrogenase (quinone) (336 aa).

Residues 62 to 66 (AGLDK) and threonine 86 contribute to the FMN site. Position 66 (lysine 66) interacts with substrate. Residue 111–115 (NRMGF) participates in substrate binding. FMN-binding residues include asparagine 139 and asparagine 172. Asparagine 172 contributes to the substrate binding site. The active-site Nucleophile is the serine 175. Asparagine 177 serves as a coordination point for substrate. Residues lysine 217 and threonine 245 each contribute to the FMN site. 246 to 247 (NT) contacts substrate. FMN contacts are provided by residues glycine 268, glycine 297, and 318–319 (YS).

It belongs to the dihydroorotate dehydrogenase family. Type 2 subfamily. Monomer. It depends on FMN as a cofactor.

It localises to the cell membrane. It carries out the reaction (S)-dihydroorotate + a quinone = orotate + a quinol. The protein operates within pyrimidine metabolism; UMP biosynthesis via de novo pathway; orotate from (S)-dihydroorotate (quinone route): step 1/1. Catalyzes the conversion of dihydroorotate to orotate with quinone as electron acceptor. The protein is Dihydroorotate dehydrogenase (quinone) of Baumannia cicadellinicola subsp. Homalodisca coagulata.